We begin with the raw amino-acid sequence, 1251 residues long: Insulin receptor substrate 1 (1251 aa).

Ser-3 is subject to Phosphoserine. The segment at 3–137 (SPPESDGFSD…GAGGGGGSCS (135 aa)) is mediates interaction with PHIP. The PH domain maps to 12 to 115 (DVRKVGYLRK…WYQALLQLHN (104 aa)). Ser-99 is subject to Phosphoserine; by CK2. Residues 160 to 264 (FKEVWQVILK…EAMRAMSDEF (105 aa)) enclose the IRS-type PTB domain. The tract at residues 262-430 (DEFRPRSKSQ…SDGGFISSDE (169 aa)) is disordered. Low complexity predominate over residues 269 to 281 (KSQSSSNCSNPIS). A Phosphoserine modification is found at Ser-270. Residue Ser-307 is modified to Phosphoserine; by RPS6KB1. Residue Ser-312 is modified to Phosphoserine; by IKKB, MAPK8 and RPS6KB1. Phosphoserine is present on residues Ser-323, Ser-330, Ser-345, and Ser-348. Positions 354 to 363 (THAHRHRGSA) are enriched in basic residues. Low complexity-rich tracts occupy residues 383–404 (SPSA…GSTS) and 412–424 (SSAS…SDGG). Phosphoserine is present on Ser-419. Residues Thr-446 and Thr-453 each carry the phosphothreonine modification. At Tyr-465 the chain carries Phosphotyrosine; by INSR. The short motif at 465-468 (YICM) is the YXXM motif 1 element. A disordered region spans residues 494-513 (YTPGTGLGTSPALAGDEASS). A Phosphoserine; by RPS6KB1 modification is found at Ser-527. The short motif at 551-554 (YTEM) is the YXXM motif 2 element. Residues 594-610 (RRGGHHRPDSSTLHTDD) show a composition bias toward basic and acidic residues. The segment at 594 to 616 (RRGGHHRPDSSTLHTDDGYMPMS) is disordered. Phosphotyrosine; by INSR is present on Tyr-612. The YXXM motif 3 signature appears at 612–615 (YMPM). Ser-629 is modified (phosphoserine). Residue Tyr-632 is modified to Phosphotyrosine; by INSR. The YXXM motif 4 signature appears at 632–635 (YMPM). Ser-636 is modified (phosphoserine; by RPS6KB1). Tyr-662 is subject to Phosphotyrosine. The YXXM motif 5 motif lies at 662 to 665 (YMMM). The tract at residues 668 to 692 (SGGCSPDIGGGPSSSSSSTVPSGSS) is disordered. Positions 730–733 (YMNM) match the YXXM motif 6 motif. 2 disordered regions span residues 734 to 753 (SPVG…GPED) and 769 to 946 (FKHT…EETG). Residues 774 to 783 (RPGEPEEGAR) show a composition bias toward basic and acidic residues. Ser-792 is subject to Phosphoserine; by AMPK and SIK2. 2 stretches are compositionally biased toward low complexity: residues 799–813 (AATA…SSDS) and 875–891 (QQQQ…QQQQ). Residue Ser-901 is modified to Phosphoserine. Tyr-905 is subject to Phosphotyrosine; by INSR. Residues 905 to 907 (YVN) are GRB2-binding. The segment covering 924–937 (SRSSPSVRCPSQLQ) has biased composition (polar residues). A phosphotyrosine; by INSR mark is found at Tyr-950 and Tyr-998. 3 short sequence motifs (YXXM motif) span residues 950 to 953 (YMKM), 998 to 1001 (YMTM), and 1021 to 1024 (YADM). Disordered regions lie at residues 1091 to 1124 (NQSA…RVGN) and 1130 to 1149 (AGAA…DVKR). Phosphoserine occurs at positions 1109 and 1110. The segment covering 1111-1123 (ETFSSTPSATRVG) has biased composition (polar residues). Tyr-1188 carries the post-translational modification Phosphotyrosine; by INSR. Lys-1195 participates in a covalent cross-link: Glycyl lysine isopeptide (Lys-Gly) (interchain with G-Cter in ubiquitin). The interval 1195 to 1251 (KDFKQRPQECTPQPQPPPPPPPHQPLGSSESSSTRRSSEDLSAYASISFQKQPEDLQ) is disordered. A compositionally biased stretch (pro residues) spans 1207-1218 (QPQPPPPPPPHQ). A Phosphotyrosine; by INSR modification is found at Tyr-1238.

In terms of assembly, interacts with UBTF and PIK3CA. Interacts (via phosphorylated YXXM motifs) with PIK3R1. Interacts with ROCK1 and FER. Interacts (via PH domain) with PHIP. Interacts with GRB2. Interacts with SOCS7. Interacts (via IRS-type PTB domain) with IGF1R and INSR (via the tyrosine-phosphorylated NPXY motif). Interacts with ALK. Interacts with EIF2AK2/PKR. Interacts with GKAP1. Interacts with DGKZ in the absence of insulin; insulin stimulation decreases this interaction. Found in a ternary complex with DGKZ and PIP5K1A in the absence of insulin stimulation. Interacts with SQSTM1; the interaction is disrupted by the presence of tensin TNS2. Interacts with NCK1 (via SH2 domain). Interacts with NCK2 (via SH3 domain). Interacts with SH2B1; this interaction enhances leptin-induced activation of the PI3-kinase pathway. Interacts with DVL2; this interaction promotes the Wnt/beta-catenin signaling pathway. Interacts with JAK1. Serine phosphorylation of IRS1 is a mechanism for insulin resistance. Ser-312 phosphorylation inhibits insulin action through disruption of IRS1 interaction with the insulin receptor. Phosphorylation of Tyr-905 is required for GRB2-binding. Phosphorylated by ALK. Phosphorylated at Ser-270, Ser-307, Ser-636 and Ser-1109 by RPS6KB1; phosphorylation induces accelerated degradation of IRS1. Phosphorylated on tyrosine residues in response to insulin. In skeletal muscles, dephosphorylated on Tyr-612 by TNS2 under anabolic conditions; dephosphorylation results in the proteasomal degradation of IRS1. Post-translationally, ubiquitinated by the Cul7-RING(FBXW8) complex in a mTOR-dependent manner, leading to its degradation: the Cul7-RING(FBXW8) complex recognizes and binds IRS1 previously phosphorylated by S6 kinase (RPS6KB1 or RPS6KB2). Ubiquitinated by TRAF4 through 'Lys-29' linkage; this ubiquitination regulates the interaction of IRS1 with IGFR and IRS1 tyrosine phosphorylation upon IGF1 stimulation. In terms of processing, S-nitrosylation at by BLVRB inhibits its activity.

It localises to the cytoplasm. The protein resides in the nucleus. In terms of biological role, signaling adapter protein that participates in the signal transduction from two prominent receptor tyrosine kinases, insulin receptor/INSR and insulin-like growth factor I receptor/IGF1R. Plays therefore an important role in development, growth, glucose homeostasis as well as lipid metabolism. Upon phosphorylation by the insulin receptor, functions as a signaling scaffold that propagates insulin action through binding to SH2 domain-containing proteins including the p85 regulatory subunit of PI3K, NCK1, NCK2, GRB2 or SHP2. Recruitment of GRB2 leads to the activation of the guanine nucleotide exchange factor SOS1 which in turn triggers the Ras/Raf/MEK/MAPK signaling cascade. Activation of the PI3K/AKT pathway is responsible for most of insulin metabolic effects in the cell, and the Ras/Raf/MEK/MAPK is involved in the regulation of gene expression and in cooperation with the PI3K pathway regulates cell growth and differentiation. Acts a positive regulator of the Wnt/beta-catenin signaling pathway through suppression of DVL2 autophagy-mediated degradation leading to cell proliferation. The polypeptide is Insulin receptor substrate 1 (IRS1) (Chlorocebus aethiops (Green monkey)).